The sequence spans 247 residues: UDP-2,3-diacylglucosamine hydrolase (247 aa).

Mn(2+) contacts are provided by aspartate 8, histidine 10, aspartate 41, asparagine 79, and histidine 114. 79–80 is a binding site for substrate; sequence NR. Substrate-binding residues include aspartate 122, serine 160, aspartate 171, asparagine 174, and histidine 202. 2 residues coordinate Mn(2+): histidine 202 and histidine 204.

Belongs to the LpxH family. It depends on Mn(2+) as a cofactor.

The protein localises to the cell inner membrane. The catalysed reaction is UDP-2-N,3-O-bis[(3R)-3-hydroxytetradecanoyl]-alpha-D-glucosamine + H2O = 2-N,3-O-bis[(3R)-3-hydroxytetradecanoyl]-alpha-D-glucosaminyl 1-phosphate + UMP + 2 H(+). It functions in the pathway glycolipid biosynthesis; lipid IV(A) biosynthesis; lipid IV(A) from (3R)-3-hydroxytetradecanoyl-[acyl-carrier-protein] and UDP-N-acetyl-alpha-D-glucosamine: step 4/6. Hydrolyzes the pyrophosphate bond of UDP-2,3-diacylglucosamine to yield 2,3-diacylglucosamine 1-phosphate (lipid X) and UMP by catalyzing the attack of water at the alpha-P atom. Involved in the biosynthesis of lipid A, a phosphorylated glycolipid that anchors the lipopolysaccharide to the outer membrane of the cell. This Xanthomonas oryzae pv. oryzae (strain MAFF 311018) protein is UDP-2,3-diacylglucosamine hydrolase.